The following is a 330-amino-acid chain: MKTAYIAKQRQISFVKSHFSRQLEERLGLIEVQAPILSRVGDGTQDNLSGCEKAVQVKVKALPDAQFEVVHSLAKWKRQTLGQHDFSAGEGLYTHMKALRPDEDRLSPLHSVYVDQWDWERVMGDGERQFSTLKSTVEAIWAGIKATEAAVSEEFGLAPFLPDQIHFVHSQELLSRYPDLDAKGRERAIAKDLGAVFLVGIGGKLSDGHRHDVRAPDYDDWSTPSELGHAGLNGDILVWNPVLEDAFELSSMGIRVDADTLKHQLALTGDEDRLQLEWHQALLRGEMPQTIGGGIGQSRLTMLLLQLPHIGQVQCGVWPAAVRESVPSLL.

It belongs to the class-II aminoacyl-tRNA synthetase family. AsnA subfamily.

It localises to the cytoplasm. The catalysed reaction is L-aspartate + NH4(+) + ATP = L-asparagine + AMP + diphosphate + H(+). Its pathway is amino-acid biosynthesis; L-asparagine biosynthesis; L-asparagine from L-aspartate (ammonia route): step 1/1. The sequence is that of Aspartate--ammonia ligase from Shigella dysenteriae serotype 1 (strain Sd197).